A 227-amino-acid polypeptide reads, in one-letter code: Phosphatidylserine decarboxylase proenzyme (227 aa).

Catalysis depends on serine 184, which acts as the Schiff-base intermediate with substrate; via pyruvic acid. Serine 184 is modified (pyruvic acid (Ser); by autocatalysis).

Belongs to the phosphatidylserine decarboxylase family. PSD-A subfamily. Heterodimer of a large membrane-associated beta subunit and a small pyruvoyl-containing alpha subunit. It depends on pyruvate as a cofactor. Post-translationally, is synthesized initially as an inactive proenzyme. Formation of the active enzyme involves a self-maturation process in which the active site pyruvoyl group is generated from an internal serine residue via an autocatalytic post-translational modification. Two non-identical subunits are generated from the proenzyme in this reaction, and the pyruvate is formed at the N-terminus of the alpha chain, which is derived from the carboxyl end of the proenzyme. The post-translation cleavage follows an unusual pathway, termed non-hydrolytic serinolysis, in which the side chain hydroxyl group of the serine supplies its oxygen atom to form the C-terminus of the beta chain, while the remainder of the serine residue undergoes an oxidative deamination to produce ammonia and the pyruvoyl prosthetic group on the alpha chain.

It is found in the cell membrane. The enzyme catalyses a 1,2-diacyl-sn-glycero-3-phospho-L-serine + H(+) = a 1,2-diacyl-sn-glycero-3-phosphoethanolamine + CO2. It participates in phospholipid metabolism; phosphatidylethanolamine biosynthesis; phosphatidylethanolamine from CDP-diacylglycerol: step 2/2. Catalyzes the formation of phosphatidylethanolamine (PtdEtn) from phosphatidylserine (PtdSer). The sequence is that of Phosphatidylserine decarboxylase proenzyme from Ehrlichia ruminantium (strain Welgevonden).